The following is a 315-amino-acid chain: Rhomboid-related protein 4 (315 aa).

Topologically, residues 1–21 (MQRRTRGINTGLLLLLSQVFQ) are cytoplasmic. A helical membrane pass occupies residues 22-42 (IGINNIPPVTLATLAVNVWFF). Over 43 to 103 (LNPWKPLYHS…KLERRLGSRW (61 aa)) the chain is Lumenal. Residues 104–124 (FAYVIATFSLLTGVVYLLLQF) form a helical membrane-spanning segment. The Cytoplasmic segment spans residues 125–137 (TVAELLNQPDFKR). The helical transmembrane segment at 138–154 (NCAVGFSGVLFALKVLS) threads the bilayer. The active-site Nucleophile is Ser-144. Residues 155–180 (NHYCPGGFVNILGFPVPNRFACWAEL) are Lumenal-facing. Residues 181–201 (VAIHFCTPGTSFAGHLAGILV) form a helical membrane-spanning segment. His-195 is an active-site residue. The Cytoplasmic segment spans residues 202 to 315 (GLMYTQGPLK…RQRLHRFDGQ (114 aa)). The tract at residues 269-284 (SEEEQLERALRASIWD) is ubiquitin-binding domain (UBD). Positions 301–315 (PEEMRRQRLHRFDGQ) are VCP/p97-interacting motif (VIM).

Belongs to the peptidase S54 family. In terms of assembly, interacts with BIK and STEAP3. Interacts (via C-terminal domain) with VCP/P97. Interacts with ubiquitin and ubiquitinated proteins. In terms of tissue distribution, expressed in testis (at protein level). Expressed in intestine, lung, brain, kidney, epididymis, stomach, muscle, spleen, liver, heart and testis.

The protein resides in the endoplasmic reticulum membrane. It is found in the mitochondrion membrane. It catalyses the reaction Cleaves type-1 transmembrane domains using a catalytic dyad composed of serine and histidine that are contributed by different transmembrane domains.. With respect to regulation, inhibited by aprotinin. In terms of biological role, intramembrane-cleaving serine protease that cleaves single transmembrane or multi-pass membrane proteins in the hydrophobic plane of the membrane, luminal loops and juxtamembrane regions. Involved in regulated intramembrane proteolysis and the subsequent release of functional polypeptides from their membrane anchors. Functional component of endoplasmic reticulum-associated degradation (ERAD) for misfolded membrane proteins. Required for the degradation process of some specific misfolded endoplasmic reticulum (ER) luminal proteins. Participates in the transfer of misfolded proteins from the ER to the cytosol, where they are destroyed by the proteasome in a ubiquitin-dependent manner. Functions in BIK, MPZ, PKD1, PTCRA, RHO, STEAP3 and TRAC processing. Involved in the regulation of exosomal secretion; inhibits the TSAP6-mediated secretion pathway. Involved in the regulation of apoptosis; modulates BIK-mediated apoptotic activity. Also plays a role in the regulation of spermatogenesis; inhibits apoptotic activity in spermatogonia. The protein is Rhomboid-related protein 4 (Rhbdd1) of Mus musculus (Mouse).